A 401-amino-acid polypeptide reads, in one-letter code: Deoxyhypusine synthase-like protein (401 aa).

Belongs to the deoxyhypusine synthase family.

In Thermosynechococcus vestitus (strain NIES-2133 / IAM M-273 / BP-1), this protein is Deoxyhypusine synthase-like protein.